A 311-amino-acid chain; its full sequence is Light-independent protochlorophyllide reductase iron-sulfur ATP-binding protein (311 aa).

ATP contacts are provided by residues 10 to 15 (GIGKST) and K39. Residue S14 coordinates Mg(2+). 2 residues coordinate [4Fe-4S] cluster: C95 and C129. Residue 180-181 (NR) coordinates ATP.

Belongs to the NifH/BchL/ChlL family. As to quaternary structure, homodimer. Protochlorophyllide reductase is composed of three subunits; ChlL, ChlN and ChlB. [4Fe-4S] cluster serves as cofactor.

The protein resides in the plastid. It is found in the chloroplast. It carries out the reaction chlorophyllide a + oxidized 2[4Fe-4S]-[ferredoxin] + 2 ADP + 2 phosphate = protochlorophyllide a + reduced 2[4Fe-4S]-[ferredoxin] + 2 ATP + 2 H2O. The protein operates within porphyrin-containing compound metabolism; chlorophyll biosynthesis (light-independent). Component of the dark-operative protochlorophyllide reductase (DPOR) that uses Mg-ATP and reduced ferredoxin to reduce ring D of protochlorophyllide (Pchlide) to form chlorophyllide a (Chlide). This reaction is light-independent. The L component serves as a unique electron donor to the NB-component of the complex, and binds Mg-ATP. The polypeptide is Light-independent protochlorophyllide reductase iron-sulfur ATP-binding protein (Oltmannsiellopsis viridis (Marine flagellate)).